The chain runs to 251 residues: Ubiquitin-conjugating enzyme E2 22 (251 aa).

Residues N10–K156 form the UBC core domain. C94 acts as the Glycyl thioester intermediate in catalysis. Over residues G230 to K240 the composition is skewed to basic and acidic residues. The disordered stretch occupies residues G230–L251. Residues G230–L251 are a coiled coil. The segment covering V241–L251 has biased composition (basic residues).

Belongs to the ubiquitin-conjugating enzyme family. In terms of processing, self-ubiquitinated. Expressed in seeds, pistils, siliques, hypocotyls and leaves.

The catalysed reaction is S-ubiquitinyl-[E1 ubiquitin-activating enzyme]-L-cysteine + [E2 ubiquitin-conjugating enzyme]-L-cysteine = [E1 ubiquitin-activating enzyme]-L-cysteine + S-ubiquitinyl-[E2 ubiquitin-conjugating enzyme]-L-cysteine.. It functions in the pathway protein modification; protein ubiquitination. In terms of biological role, accepts the ubiquitin from the E1 complex and catalyzes its covalent attachment to other proteins. This is Ubiquitin-conjugating enzyme E2 22 (UBC22) from Arabidopsis thaliana (Mouse-ear cress).